A 295-amino-acid chain; its full sequence is GTPase Era (295 aa).

The Era-type G domain occupies 3–170 (KSGFVTIVGR…VDLMKTELPE (168 aa)). The interval 11–18 (GRPNVGKS) is G1. 11–18 (GRPNVGKS) provides a ligand contact to GTP. A G2 region spans residues 37-41 (QTTRN). The tract at residues 58–61 (DTPG) is G3. Residues 58–62 (DTPGI) and 120–123 (NKID) contribute to the GTP site. Residues 120–123 (NKID) are G4. Residues 149–151 (IAA) form a G5 region. The 78-residue stretch at 201-278 (LRDEVPHGIA…NVKIWVKVRK (78 aa)) folds into the KH type-2 domain.

This sequence belongs to the TRAFAC class TrmE-Era-EngA-EngB-Septin-like GTPase superfamily. Era GTPase family. As to quaternary structure, monomer.

The protein localises to the cytoplasm. It localises to the cell membrane. Its function is as follows. An essential GTPase that binds both GDP and GTP, with rapid nucleotide exchange. Plays a role in 16S rRNA processing and 30S ribosomal subunit biogenesis and possibly also in cell cycle regulation and energy metabolism. This is GTPase Era from Clostridium botulinum (strain Eklund 17B / Type B).